The sequence spans 321 residues: MSSPTKEGSDTAGNAHKNSENEPSNDCTTDIESPSADPNMIYQVETNSINREPGTATSQEDAVPQAAANTELETEIQKDQREEDIKEEPLLLQIPIPRKLISLMSELGRGNYLRILLVKIDQNKPLNDRSKSHSEKAEMKANNCPVNRKIRFRLSTSWRVPFINNHEIRSMILRLLCERYFSQAEECQDTMWVKQNYIACLYRPNSFTHHERTVIFRRPLRVRYHRPLTERMTSGKFCKSTDMKGKYRFRAIVRSVLFVSHVQLQSLFNRKGFVDILRYNHTRKVMIISTNNGWKYFCPICGRLFNTYFELRRHSCRSPGN.

Residues 1–83 (MSSPTKEGSD…TEIQKDQREE (83 aa)) are disordered. Polar residues-rich tracts occupy residues 21-32 (NEPSNDCTTDIE) and 44-60 (VETN…TSQE).

The sequence is that of CPX chromosomal region candidate gene 1 protein homolog (CPXCR1) from Macaca fascicularis (Crab-eating macaque).